We begin with the raw amino-acid sequence, 185 residues long: Large ribosomal subunit protein uL5m (185 aa).

The protein belongs to the universal ribosomal protein uL5 family.

It localises to the mitochondrion. The chain is Large ribosomal subunit protein uL5m (RPL5) from Brassica napus (Rape).